We begin with the raw amino-acid sequence, 92 residues long: Small ribosomal subunit protein bS18 (92 aa).

Residues 1-22 (MADERAPQRSTSGPRKKRPFQR) are disordered.

Belongs to the bacterial ribosomal protein bS18 family. Part of the 30S ribosomal subunit. Forms a tight heterodimer with protein bS6.

Functionally, binds as a heterodimer with protein bS6 to the central domain of the 16S rRNA, where it helps stabilize the platform of the 30S subunit. This is Small ribosomal subunit protein bS18 from Citrifermentans bemidjiense (strain ATCC BAA-1014 / DSM 16622 / JCM 12645 / Bem) (Geobacter bemidjiensis).